The chain runs to 122 residues: Large-conductance mechanosensitive channel (122 aa).

The next 2 membrane-spanning stretches (helical) occupy residues phenylalanine 29–phenylalanine 49 and glycine 66–isoleucine 86.

This sequence belongs to the MscL family. In terms of assembly, homopentamer.

Its subcellular location is the cell membrane. Channel that opens in response to stretch forces in the membrane lipid bilayer. May participate in the regulation of osmotic pressure changes within the cell. The chain is Large-conductance mechanosensitive channel from Macrococcus caseolyticus (strain JCSC5402) (Macrococcoides caseolyticum).